We begin with the raw amino-acid sequence, 842 residues long: Amyloid-beta A4 precursor protein-binding family A member 1 (842 aa).

3 disordered regions span residues 1–121 (MNHL…DESA), 238–349 (RLHH…EKRD), and 366–439 (KTRT…KESR). Serine 82 is modified (phosphoserine). 2 stretches are compositionally biased toward basic and acidic residues: residues 106–115 (DGYEAERAQD) and 240–258 (HHYD…KEAE). Phosphoserine occurs at positions 246, 250, 252, 267, 284, and 289. Residue threonine 309 is modified to Phosphothreonine. Residues serine 317 and serine 372 each carry the phosphoserine modification. A Phosphothreonine modification is found at threonine 375. Over residues 392 to 403 (PTRDCDDQRPVD) the composition is skewed to basic and acidic residues. Over residues 404 to 421 (GDSPSPGSSSPLGAESSS) the composition is skewed to low complexity. Residues serine 406, serine 408, serine 413, and serine 573 each carry the phosphoserine modification. The PID domain maps to 460 to 648 (LIDGIIFAAN…LLNTQDMYND (189 aa)). The autoinhibitory helix linker stretch occupies residues 631–648 (LSQKEYSDLLNTQDMYND). 2 PDZ domains span residues 661–746 (DVFI…NIVR) and 752–828 (TVLI…MPAA).

Part of a multimeric complex containing STXBP1 and STX1A. Interacts with STXBP1. Component of the brain-specific heterotrimeric complex (LIN-10-LIN-2-LIN-7 complex) composed of at least APBA1, CASK, and LIN7, which associates with the motor protein KIF17 to transport vesicles along microtubules. Within the complex, interacts (via PDZ domain) with the motor protein KIF17; the interaction is direct and is required for association of KIF17 with the cargo that is to be transported. Binds to the cytoplasmic domain of amyloid protein (APP). Interacts (via PDZ 1 and 2 domains) with FSPB. Isoform 3 interacts (via its truncated PID domain) with active, GTP-bound RAB6A. Also interacts with GTP-bound RAB6B. Isoform 3 is expressed in brain.

The protein localises to the cytoplasm. The protein resides in the perinuclear region. It is found in the nucleus. It localises to the golgi apparatus. Functionally, putative function in synaptic vesicle exocytosis by binding to Munc18-1, an essential component of the synaptic vesicle exocytotic machinery. May modulate processing of the amyloid-beta precursor protein (APP) and hence formation of AAP-beta. Component of the LIN-10-LIN-2-LIN-7 complex, which associates with the motor protein KIF17 to transport vesicles containing N-methyl-D-aspartate (NMDA) receptor subunit NR2B along microtubules. This is Amyloid-beta A4 precursor protein-binding family A member 1 from Mus musculus (Mouse).